The primary structure comprises 167 residues: MPRSQKNDNFIDKTFTIIADILLRIVPTSQREREAFTYYRDGMSAQAEGEYAEALQNYYEAMRLEIDPYDRSYILYNIGLIHTSNGEHAKALEYYFQALERNPSLPQAFNNVAVICHYRGEQAIQQQDIESSKAWFNQAAEYWKQAIQLAPGNYIEAQNWLKITGRI.

3 TPR repeats span residues 35 to 68 (AFTY…EIDP), 72 to 105 (SYIL…NPSL), and 120 to 153 (GEQA…APGN).

Belongs to the Ycf3 family.

It is found in the plastid. The protein resides in the chloroplast thylakoid membrane. In terms of biological role, essential for the assembly of the photosystem I (PSI) complex. May act as a chaperone-like factor to guide the assembly of the PSI subunits. In Chara vulgaris (Common stonewort), this protein is Photosystem I assembly protein Ycf3.